The following is a 149-amino-acid chain: Nucleoside diphosphate kinase 1 (149 aa).

The ATP site is built by Lys-9, Phe-57, Arg-85, Thr-91, Arg-102, and Asn-112. His-115 functions as the Pros-phosphohistidine intermediate in the catalytic mechanism.

The protein belongs to the NDK family. Homohexamer. Can also form dodecamers. Mg(2+) serves as cofactor.

It is found in the nucleus. The catalysed reaction is a 2'-deoxyribonucleoside 5'-diphosphate + ATP = a 2'-deoxyribonucleoside 5'-triphosphate + ADP. It catalyses the reaction a ribonucleoside 5'-diphosphate + ATP = a ribonucleoside 5'-triphosphate + ADP. In terms of biological role, major role in the synthesis of nucleoside triphosphates other than ATP. The ATP gamma phosphate is transferred to the NDP beta phosphate via a ping-pong mechanism, using a phosphorylated active-site intermediate. Involved in transcription regulation. Has G-quadruplex (G4) DNA-binding activity, which is independent of its nucleotide-binding and kinase activity. Binds folded G4 with low nanomolar affinity and corresponding unfolded G-rich DNA more weakly. Stabilizes folded G4s regardless of whether they are prefolded or not. This Zea mays (Maize) protein is Nucleoside diphosphate kinase 1.